A 107-amino-acid chain; its full sequence is Ribonuclease P protein component 4 (107 aa).

Zn(2+) contacts are provided by Cys66, Cys69, Cys92, and Cys95.

This sequence belongs to the eukaryotic/archaeal RNase P protein component 4 family. In terms of assembly, consists of a catalytic RNA component and at least 4-5 protein subunits. The cofactor is Zn(2+).

The protein resides in the cytoplasm. It catalyses the reaction Endonucleolytic cleavage of RNA, removing 5'-extranucleotides from tRNA precursor.. In terms of biological role, part of ribonuclease P, a protein complex that generates mature tRNA molecules by cleaving their 5'-ends. The polypeptide is Ribonuclease P protein component 4 (Methanosarcina acetivorans (strain ATCC 35395 / DSM 2834 / JCM 12185 / C2A)).